The following is a 294-amino-acid chain: NAD kinase (294 aa).

Aspartate 74 acts as the Proton acceptor in catalysis. Residues 74–75 (DG), arginine 79, 149–150 (NE), aspartate 179, 190–195 (TGYSMS), and alanine 214 each bind NAD(+).

It belongs to the NAD kinase family. The cofactor is a divalent metal cation.

The protein resides in the cytoplasm. The enzyme catalyses NAD(+) + ATP = ADP + NADP(+) + H(+). Involved in the regulation of the intracellular balance of NAD and NADP, and is a key enzyme in the biosynthesis of NADP. Catalyzes specifically the phosphorylation on 2'-hydroxyl of the adenosine moiety of NAD to yield NADP. The chain is NAD kinase from Flavobacterium psychrophilum (strain ATCC 49511 / DSM 21280 / CIP 103535 / JIP02/86).